The primary structure comprises 159 residues: Trafficking protein particle complex subunit 6A (159 aa).

S33 is modified (phosphoserine).

Belongs to the TRAPP small subunits family. BET3 subfamily. In terms of assembly, part of the multisubunit transport protein particle (TRAPP) complex. Heterodimer with TRAPPC3. The heterodimer TRAPPC3-TRAPPC6A interacts with TRAPPC2L. Interacts with TRAPPC2L. Ubiquitous, with lowest expression in skeletal muscle and brain and highest in kidney, liver and testis, as well as in cultured melanocytes.

The protein resides in the golgi apparatus. It is found in the cis-Golgi network. Its subcellular location is the endoplasmic reticulum. In terms of biological role, may play a role in vesicular transport during the biogenesis of melanosomes. This is Trafficking protein particle complex subunit 6A from Mus musculus (Mouse).